A 513-amino-acid polypeptide reads, in one-letter code: Maturase K (513 aa).

The protein belongs to the intron maturase 2 family. MatK subfamily.

It is found in the plastid. The protein localises to the chloroplast. Functionally, usually encoded in the trnK tRNA gene intron. Probably assists in splicing its own and other chloroplast group II introns. The sequence is that of Maturase K from Pinus resinosa (Red pine).